The chain runs to 500 residues: Probable malate:quinone oxidoreductase (500 aa).

The protein belongs to the MQO family. It depends on FAD as a cofactor.

The enzyme catalyses (S)-malate + a quinone = a quinol + oxaloacetate. It functions in the pathway carbohydrate metabolism; tricarboxylic acid cycle; oxaloacetate from (S)-malate (quinone route): step 1/1. This is Probable malate:quinone oxidoreductase from Bacillus cereus (strain ATCC 10987 / NRS 248).